The primary structure comprises 138 residues: rRNA methyltransferase 1, mitochondrial (138 aa).

The N-terminal 21 residues, 1–21, are a transit peptide targeting the mitochondrion; the sequence is MNNQPCSIVWRRFLTSKVKPA. Residues 92 to 113 form a disordered region; the sequence is KQDILSSKRQQEEHKSKYSRKS.

The protein belongs to the class IV-like SAM-binding methyltransferase superfamily. RNA methyltransferase TrmH family.

It is found in the mitochondrion. The enzyme catalyses a guanosine in 21S rRNA + S-adenosyl-L-methionine = a 2'-O-methylguanosine in 21S rRNA + S-adenosyl-L-homocysteine + H(+). Its function is as follows. S-adenosyl-L-methionine-dependent 2'-O-ribose methyltransferase that catalyzes the formation of the 2'-O-methylguanosine corresponding to position 2270 in S.cerevisiae 21S mitochondrial large ribosomal RNA, a universally conserved modification in the peptidyl transferase domain of the 21S rRNA. The protein is rRNA methyltransferase 1, mitochondrial of Lachancea kluyveri (strain ATCC 58438 / CBS 3082 / BCRC 21498 / NBRC 1685 / JCM 7257 / NCYC 543 / NRRL Y-12651) (Yeast).